Here is a 338-residue protein sequence, read N- to C-terminus: Lipoate-protein ligase A (338 aa).

In terms of domain architecture, BPL/LPL catalytic spans 29-216 (PATQRVLFLW…AFFAHYGERV (188 aa)). ATP is bound by residues arginine 71, 76 to 79 (GAVF), and lysine 134. Lysine 134 contacts (R)-lipoate.

It belongs to the LplA family. Monomer.

The protein resides in the cytoplasm. It catalyses the reaction L-lysyl-[lipoyl-carrier protein] + (R)-lipoate + ATP = N(6)-[(R)-lipoyl]-L-lysyl-[lipoyl-carrier protein] + AMP + diphosphate + H(+). Its pathway is protein modification; protein lipoylation via exogenous pathway; protein N(6)-(lipoyl)lysine from lipoate: step 1/2. It functions in the pathway protein modification; protein lipoylation via exogenous pathway; protein N(6)-(lipoyl)lysine from lipoate: step 2/2. Functionally, catalyzes both the ATP-dependent activation of exogenously supplied lipoate to lipoyl-AMP and the transfer of the activated lipoyl onto the lipoyl domains of lipoate-dependent enzymes. The polypeptide is Lipoate-protein ligase A (Escherichia coli O6:K15:H31 (strain 536 / UPEC)).